A 563-amino-acid chain; its full sequence is Chaperonin GroEL 1 (563 aa).

ATP contacts are provided by residues 29–32 (TIGP), 86–90 (DGTTT), G413, 476–478 (NAA), and D492. Positions 520-545 (DKPEPPSPAGGEGGGDPMGGMGGMGG) are disordered. A compositionally biased stretch (gly residues) spans 529–545 (GGEGGGDPMGGMGGMGG).

This sequence belongs to the chaperonin (HSP60) family. Forms a cylinder of 14 subunits composed of two heptameric rings stacked back-to-back. Interacts with the co-chaperonin GroES.

The protein resides in the cytoplasm. The enzyme catalyses ATP + H2O + a folded polypeptide = ADP + phosphate + an unfolded polypeptide.. In terms of biological role, together with its co-chaperonin GroES, plays an essential role in assisting protein folding. The GroEL-GroES system forms a nano-cage that allows encapsulation of the non-native substrate proteins and provides a physical environment optimized to promote and accelerate protein folding. This is Chaperonin GroEL 1 from Prochlorococcus marinus (strain SARG / CCMP1375 / SS120).